The primary structure comprises 233 residues: Ribonuclease HII (233 aa).

The RNase H type-2 domain occupies 21 to 211 (KIIAGVDEVG…LDALPQWRHL (191 aa)). A divalent metal cation is bound by residues Asp-27, Glu-28, and Asp-119.

It belongs to the RNase HII family. The cofactor is Mn(2+). Requires Mg(2+) as cofactor.

It is found in the cytoplasm. It catalyses the reaction Endonucleolytic cleavage to 5'-phosphomonoester.. Its function is as follows. Endonuclease that specifically degrades the RNA of RNA-DNA hybrids. The chain is Ribonuclease HII (rnhB) from Streptomyces coelicolor (strain ATCC BAA-471 / A3(2) / M145).